A 1197-amino-acid polypeptide reads, in one-letter code: DNA-directed RNA polymerase subunit beta (1197 aa).

Over residues glutamine 581–valine 597 the composition is skewed to polar residues. 2 disordered regions span residues glutamine 581–aspartate 603 and glutamate 1172–valine 1197.

The protein belongs to the RNA polymerase beta chain family. The RNAP catalytic core consists of 2 alpha, 1 beta, 1 beta' and 1 omega subunit. When a sigma factor is associated with the core the holoenzyme is formed, which can initiate transcription.

It catalyses the reaction RNA(n) + a ribonucleoside 5'-triphosphate = RNA(n+1) + diphosphate. In terms of biological role, DNA-dependent RNA polymerase catalyzes the transcription of DNA into RNA using the four ribonucleoside triphosphates as substrates. This is DNA-directed RNA polymerase subunit beta from Oenococcus oeni (strain ATCC BAA-331 / PSU-1).